The primary structure comprises 488 residues: Probable aldehyde dehydrogenase (488 aa).

NAD(+) is bound at residue 240 to 245; the sequence is GSSVTG. Catalysis depends on residues E262 and C296.

Belongs to the aldehyde dehydrogenase family.

It carries out the reaction an aldehyde + NAD(+) + H2O = a carboxylate + NADH + 2 H(+). Involved in an alpha-terpineol oxidation system. This is Probable aldehyde dehydrogenase (terPE) from Pseudomonas sp.